We begin with the raw amino-acid sequence, 525 residues long: tRNA-splicing endonuclease subunit Sen54 (525 aa).

M1 carries the post-translational modification N-acetylmethionine. Residues M1 to D46 are disordered. Positions P7–L23 are enriched in low complexity. At S178 the chain carries Phosphoserine. At Y180 the chain carries Phosphotyrosine. Positions L220 to A232 are enriched in low complexity. The tract at residues L220–D273 is disordered.

This sequence belongs to the SEN54 family. TRNA splicing endonuclease is a heterotetramer composed of TSEN2, TSEN15, TSEN34/LENG5 and TSEN54. tRNA splicing endonuclease complex also contains proteins of the pre-mRNA 3'-end processing machinery such as CLP1, CPSF1, CPSF4 and CSTF2.

It is found in the nucleus. Its subcellular location is the nucleolus. Non-catalytic subunit of the tRNA-splicing endonuclease complex, a complex responsible for identification and cleavage of the splice sites in pre-tRNA. It cleaves pre-tRNA at the 5' and 3' splice sites to release the intron. The products are an intron and two tRNA half-molecules bearing 2',3' cyclic phosphate and 5'-OH termini. There are no conserved sequences at the splice sites, but the intron is invariably located at the same site in the gene, placing the splice sites an invariant distance from the constant structural features of the tRNA body. The tRNA splicing endonuclease is also involved in mRNA processing via its association with pre-mRNA 3'-end processing factors, establishing a link between pre-tRNA splicing and pre-mRNA 3'-end formation, suggesting that the endonuclease subunits function in multiple RNA-processing events. This chain is tRNA-splicing endonuclease subunit Sen54 (Tsen54), found in Mus musculus (Mouse).